Here is a 160-residue protein sequence, read N- to C-terminus: MGQERLDNANPTLFDSKPRHRPVTGTERDESVEDPIDSWEIFDLIRDINDPEHPYTLEQLNVVQEELIKVFIDEEETFVKVNFTPTIPHCSMATLIGLAIRVKLLRSLHPKVKVSVSITPGSHSTEESINRQLADKERVAAAMENQGLMHAVNECLRVPE.

A disordered region spans residues 1 to 32 (MGQERLDNANPTLFDSKPRHRPVTGTERDESV).

The protein belongs to the MIP18 family.

Functionally, may play a role in chromosome segregation through establishment of sister chromatid cohesion. The protein is MIP18 family protein F45G2.10 of Caenorhabditis elegans.